Reading from the N-terminus, the 311-residue chain is Porphobilinogen deaminase (311 aa).

S-(dipyrrolylmethanemethyl)cysteine is present on cysteine 240.

The protein belongs to the HMBS family. As to quaternary structure, monomer. Dipyrromethane is required as a cofactor.

It catalyses the reaction 4 porphobilinogen + H2O = hydroxymethylbilane + 4 NH4(+). It functions in the pathway porphyrin-containing compound metabolism; protoporphyrin-IX biosynthesis; coproporphyrinogen-III from 5-aminolevulinate: step 2/4. Its function is as follows. Tetrapolymerization of the monopyrrole PBG into the hydroxymethylbilane pre-uroporphyrinogen in several discrete steps. The protein is Porphobilinogen deaminase of Natranaerobius thermophilus (strain ATCC BAA-1301 / DSM 18059 / JW/NM-WN-LF).